A 157-amino-acid polypeptide reads, in one-letter code: Large ribosomal subunit protein uL11 (157 aa).

It belongs to the universal ribosomal protein uL11 family. Part of the ribosomal stalk of the 50S ribosomal subunit. Interacts with L10 and the large rRNA to form the base of the stalk. L10 forms an elongated spine to which L12 dimers bind in a sequential fashion forming a multimeric L10(L12)X complex.

Its function is as follows. Forms part of the ribosomal stalk which helps the ribosome interact with GTP-bound translation factors. This Methanocorpusculum labreanum (strain ATCC 43576 / DSM 4855 / Z) protein is Large ribosomal subunit protein uL11.